The chain runs to 100 residues: uncharacterized protein (100 aa).

The protein resides in the mitochondrion. This is an uncharacterized protein from Arabidopsis thaliana (Mouse-ear cress).